The primary structure comprises 61 residues: Small ribosomal subunit protein uS14 (61 aa).

Positions 24, 27, 40, and 43 each coordinate Zn(2+).

It belongs to the universal ribosomal protein uS14 family. Zinc-binding uS14 subfamily. As to quaternary structure, part of the 30S ribosomal subunit. Contacts proteins S3 and S10. Zn(2+) is required as a cofactor.

Binds 16S rRNA, required for the assembly of 30S particles and may also be responsible for determining the conformation of the 16S rRNA at the A site. In Leptospira biflexa serovar Patoc (strain Patoc 1 / Ames), this protein is Small ribosomal subunit protein uS14.